The chain runs to 367 residues: TATA-box-binding protein-like (367 aa).

The segment at 1–26 (MKKQSKTHKVDYKYYNSGSKTSRNRN) is disordered. A compositionally biased stretch (polar residues) spans 16–26 (NSGSKTSRNRN).

The protein belongs to the TBP family.

The polypeptide is TATA-box-binding protein-like (Acanthamoeba polyphaga (Amoeba)).